Consider the following 48-residue polypeptide: uncharacterized protein (48 aa).

Belongs to the ELIP/psbS family.

It localises to the plastid. The protein localises to the chloroplast. Possible role in chlorophyll and/or carotenoid binding. This is an uncharacterized protein from Porphyra purpurea (Red seaweed).